Here is a 370-residue protein sequence, read N- to C-terminus: 3-dehydroquinate synthase (370 aa).

NAD(+) contacts are provided by residues 70 to 75, 104 to 108, 128 to 129, Lys-141, Lys-150, and 168 to 171; these read DAEDGK, GAATD, TT, and TLET. Glu-183, His-246, and His-262 together coordinate Zn(2+).

Belongs to the sugar phosphate cyclases superfamily. Dehydroquinate synthase family. Co(2+) is required as a cofactor. Requires Zn(2+) as cofactor. It depends on NAD(+) as a cofactor.

It localises to the cytoplasm. It catalyses the reaction 7-phospho-2-dehydro-3-deoxy-D-arabino-heptonate = 3-dehydroquinate + phosphate. It functions in the pathway metabolic intermediate biosynthesis; chorismate biosynthesis; chorismate from D-erythrose 4-phosphate and phosphoenolpyruvate: step 2/7. Its function is as follows. Catalyzes the conversion of 3-deoxy-D-arabino-heptulosonate 7-phosphate (DAHP) to dehydroquinate (DHQ). This Rhodococcus opacus (strain B4) protein is 3-dehydroquinate synthase.